The following is an 878-amino-acid chain: Multiple C2 and transmembrane domain-containing protein 2 (878 aa).

Disordered stretches follow at residues 20 to 40 and 143 to 178; these read LINLSKKKAKKSPSKPLDLRV and KPSLGRDAPEEHDKTHGNDDLNASMTSQHFEEESTL. Residues 149–161 show a composition bias toward basic and acidic residues; it reads DAPEEHDKTHGND. C2 domains follow at residues 177–292, 334–452, and 486–607; these read TLGE…EHIL, SKSS…CLEL, and PSER…CYVL. 5 residues coordinate Ca(2+): aspartate 210, aspartate 216, aspartate 263, aspartate 265, and aspartate 270. Ca(2+) is bound by residues aspartate 525, aspartate 531, aspartate 577, aspartate 579, and aspartate 585. A helical transmembrane segment spans residues 694–714; it reads FVVFLVTVWNFELYMIPLALL. The segment at 728 to 752 is disordered; that stretch reads KASSTQDSQESTDVEEEGKEEEKES. The segment covering 737-746 has biased composition (acidic residues); sequence ESTDVEEEGK. Residues 794–814 traverse the membrane as a helical segment; sequence PFLSLLACLILAITTVILYFI.

It belongs to the MCTP family. Ca(2+) serves as cofactor.

The protein localises to the membrane. Its function is as follows. Might play a role in the development of cardiac outflow tract. This Mus musculus (Mouse) protein is Multiple C2 and transmembrane domain-containing protein 2 (Mctp2).